The chain runs to 747 residues: H(+)/Cl(-) exchange transporter 4 (747 aa).

A required for localization in the endoplasmic reticulum region spans residues methionine 1–serine 50. Residues methionine 1–alanine 54 are Cytoplasmic-facing. The next 2 membrane-spanning stretches (helical) occupy residues tryptophan 55 to serine 92 and leucine 138 to phenylalanine 161. Positions glycine 167–proline 171 match the Selectivity filter part_1 motif. Serine 168 contacts chloride. Residues isoleucine 170–leucine 177 constitute an intramembrane region (helical). The next 2 helical transmembrane spans lie at glycine 187–glycine 205 and glutamate 211–serine 230. The Selectivity filter part_2 signature appears at glycine 209 to proline 213. 2 intramembrane regions (helical) span residues valine 242–alanine 254 and proline 258–leucine 266. Helical transmembrane passes span leucine 278–asparagine 296, phenylalanine 320–arginine 345, leucine 352–tyrosine 372, methionine 429–methionine 449, and glycine 454–glycine 473. Residues glycine 454 to proline 458 carry the Selectivity filter part_3 motif. Phenylalanine 456 lines the chloride pocket. 2 consecutive intramembrane regions (helical) follow at residues glycine 501–valine 515 and threonine 519–threonine 530. An intramembrane region (note=Loop between two helices) is located at residues glycine 531–glutamate 534. Residues tyrosine 535 to phenylalanine 553 traverse the membrane as a helical segment. Residues glycine 554–asparagine 747 are Cytoplasmic-facing. A chloride-binding site is contributed by tyrosine 559. 2 CBS domains span residues methionine 587–glutamate 653 and leucine 680–glutamate 742. Residues serine 597 and tyrosine 618 to glycine 620 each bind ATP. Residues glycine 654–isoleucine 683 form a required for localization in the endoplasmic reticulum region. Threonine 725–aspartate 728 serves as a coordination point for ATP.

This sequence belongs to the chloride channel (TC 2.A.49) family. ClC-4/CLCN4 subfamily. As to expression, predominantly present in excitable tissues such as nervous system and skeletal muscle. Not detected in heart.

The protein localises to the early endosome membrane. Its subcellular location is the late endosome membrane. It is found in the endoplasmic reticulum membrane. The protein resides in the lysosome membrane. It localises to the recycling endosome membrane. In terms of biological role, strongly outwardly rectifying, electrogenic H(+)/Cl(-)exchanger which mediates the exchange of chloride ions against protons. The CLC channel family contains both chloride channels and proton-coupled anion transporters that exchange chloride or another anion for protons. The presence of conserved gating glutamate residues is typical for family members that function as antiporters. The sequence is that of H(+)/Cl(-) exchange transporter 4 (Clcn4) from Mus musculus (Mouse).